The chain runs to 686 residues: MAM domain-containing protein 2 (686 aa).

Residues 1–18 (MLLEGVLLVVQALQLASA) form the signal peptide. MAM domains lie at 24-169 (GSCA…YCIE), 168-329 (IECD…HCQN), 340-498 (TSCD…NCRS), and 507-666 (GECT…PCAG). Residues Asn134 and Asn329 are each glycosylated (N-linked (GlcNAc...) asparagine). Asn524 carries an N-linked (GlcNAc...) asparagine glycan. The disordered stretch occupies residues 665-686 (AGMEDTTEQSSGYSEDLNEIEY).

Post-translationally, O-glycosylated; contains chondroitin sulfate.

It localises to the secreted. The protein resides in the extracellular space. It is found in the extracellular matrix. This Mus musculus (Mouse) protein is MAM domain-containing protein 2 (Mamdc2).